Reading from the N-terminus, the 244-residue chain is Methanethiol S-methyltransferase (244 aa).

5 consecutive transmembrane segments (helical) span residues 7–27 (IIYGAASYLVFLVAFGYAIGF), 41–61 (IAAPIGQAVVVNLVLLGVFAV), 90–110 (LLASVALLLLYWQWRTMPAVI), 120–140 (VALWALFWLGWATVLTSTFMI), and 181–201 (GFVVAFWATPMMTAGHLLFAI).

Belongs to the nurim family.

Its subcellular location is the membrane. The catalysed reaction is methanethiol + S-adenosyl-L-methionine = dimethyl sulfide + S-adenosyl-L-homocysteine + H(+). Its function is as follows. Catalyzes the methylation of methanethiol (MeSH) to yield dimethylsulphide (DMS). This is Methanethiol S-methyltransferase from Mycobacterium tuberculosis (strain ATCC 25618 / H37Rv).